The sequence spans 422 residues: Proton-gated ion channel subunit pbo-6 (422 aa).

Positions 1–20 are cleaved as a signal peptide; the sequence is MQCSFLTIFIFITTVTVGVA. Topologically, residues 21–233 are extracellular; that stretch reads EFSEQYQGSS…IKVARKPFYY (213 aa). Cys-151 and Cys-165 are joined by a disulfide. The next 3 membrane-spanning stretches (helical) occupy residues 234–254, 268–288, and 294–314; these read LISL…GLFA, LGVT…EKVP, and VPLL…ATIL. Over 315 to 378 the chain is Cytoplasmic; the sequence is TSTVMRVHAK…GEVSRRMDYL (64 aa). Residues 379–399 traverse the membrane as a helical segment; that stretch reads LASVFIIIISTPTLYLFYMCF.

It belongs to the ligand-gated ion channel (TC 1.A.9) family. Acetylcholine receptor (TC 1.A.9.1) subfamily. As to quaternary structure, the functional channel is a hetero-oligomer of pbo-5 and pbo-6. In terms of tissue distribution, expressed in the posterior body muscles.

Its subcellular location is the membrane. Its function is as follows. Forms a proton-gated ion channel with pbo-5 that is activated by acidification of the posterior coelomic space, leading to posterior body wall muscle contraction (pBoc) during the defecation cycle. Not necessary for stimulation of posterior body contraction (pBoc). Does not bind neurotransmitters such as acetylcholine, gamma-aminobutyric acid, glycine, serotonin, glutamate or choline. The protein is Proton-gated ion channel subunit pbo-6 of Caenorhabditis elegans.